A 134-amino-acid polypeptide reads, in one-letter code: ATP synthase epsilon chain (134 aa).

This sequence belongs to the ATPase epsilon chain family. As to quaternary structure, F-type ATPases have 2 components, CF(1) - the catalytic core - and CF(0) - the membrane proton channel. CF(1) has five subunits: alpha(3), beta(3), gamma(1), delta(1), epsilon(1). CF(0) has three main subunits: a, b and c.

It localises to the cell membrane. In terms of biological role, produces ATP from ADP in the presence of a proton gradient across the membrane. This is ATP synthase epsilon chain from Carboxydothermus hydrogenoformans (strain ATCC BAA-161 / DSM 6008 / Z-2901).